Here is a 181-residue protein sequence, read N- to C-terminus: Peptidyl-tRNA hydrolase (181 aa).

Tyrosine 14 provides a ligand contact to tRNA. The Proton acceptor role is filled by histidine 19. Tyrosine 60, asparagine 62, and asparagine 108 together coordinate tRNA.

The protein belongs to the PTH family. As to quaternary structure, monomer.

It is found in the cytoplasm. The enzyme catalyses an N-acyl-L-alpha-aminoacyl-tRNA + H2O = an N-acyl-L-amino acid + a tRNA + H(+). Hydrolyzes ribosome-free peptidyl-tRNAs (with 1 or more amino acids incorporated), which drop off the ribosome during protein synthesis, or as a result of ribosome stalling. In terms of biological role, catalyzes the release of premature peptidyl moieties from peptidyl-tRNA molecules trapped in stalled 50S ribosomal subunits, and thus maintains levels of free tRNAs and 50S ribosomes. This chain is Peptidyl-tRNA hydrolase, found in Metamycoplasma arthritidis (strain 158L3-1) (Mycoplasma arthritidis).